The sequence spans 113 residues: Hydrogenase maturation factor HypA (113 aa).

Histidine 2 contributes to the Ni(2+) binding site. Residues cysteine 73, cysteine 76, cysteine 89, and cysteine 92 each contribute to the Zn(2+) site.

The protein belongs to the HypA/HybF family.

Functionally, involved in the maturation of [NiFe] hydrogenases. Required for nickel insertion into the metal center of the hydrogenase. The polypeptide is Hydrogenase maturation factor HypA (Legionella pneumophila (strain Paris)).